We begin with the raw amino-acid sequence, 513 residues long: Transcription factor SOX-9 (513 aa).

Disordered regions lie at residues 1-67 and 160-273; these read MNLL…SEED and RLRV…FRDV. The span at 30–41 shows a compositional bias: low complexity; the sequence is SAGSPCPSGSGS. Over residues 42 to 52 the composition is skewed to polar residues; the sequence is DTENTRPQENT. 2 stretches are compositionally biased toward basic and acidic residues: residues 56-67 and 160-174; these read GEPDLKKESEED and RLRV…DYKY. The segment at 63–103 is dimerization (DIM); sequence ESEEDKFPVCIREAVSQVLKGYDWTLVPMPVRVNGSSKNKP. The segment at 63-103 is PQA; it reads ESEEDKFPVCIREAVSQVLKGYDWTLVPMPVRVNGSSKNKP. Position 64 is a phosphoserine (serine 64). Residues 105–173 constitute a DNA-binding region (HMG box); the sequence is VKRPMNAFMV…QHKKDHPDYK (69 aa). Serine 211 bears the Phosphoserine mark. Residues 224-307 form a transactivation domain (TAM) region; sequence PGKHSGQSQG…LPPNGHPGVP (84 aa). 2 short sequence motifs (9aaTAD) span residues 275–284 and 290–298; these read IGELSSDVIS and DVNEFDQYL. A disordered region spans residues 334-447; that stretch reads VWMSKQQAPP…PITRSQYDYT (114 aa). Pro residues predominate over residues 341 to 380; it reads APPPPPPPPQQSPQAPPQPPQAPPQAPQAPPQPQPAPPQP. The segment covering 387–423 has biased composition (polar residues); it reads TPLSSEPGQAQRTHIKTEQLSPSHYSEQQQHSPQQIA. The transactivation domain (TAC) stretch occupies residues 398–513; that stretch reads RTHIKTEQLS…QPVYTQLTRP (116 aa). A Glycyl lysine isopeptide (Lys-Gly) (interchain with G-Cter in ubiquitin) cross-link involves residue lysine 402. Residues 464 to 472 carry the 9aaTAD 3 motif; sequence SSLYSTFTY. Positions 483–513 are disordered; the sequence is PIADTSGVPSIPQTHSPQHWEQPVYTQLTRP. A compositionally biased stretch (polar residues) spans 489 to 513; the sequence is GVPSIPQTHSPQHWEQPVYTQLTRP.

Homodimer; homodimerization is required for activity. Interacts (via C-terminus) with ZNF219; forming a complex that binds to the COL2A1 promoter and activates COL2A1 expression. Interacts with DDRGK1. Interacts with EP300/p300. Interacts with beta-catenin (CTNNB1); inhibiting CTNNB1 activity by competing with the binding sites of TCF/LEF within CTNNB1. Post-translationally, acetylated; acetylation impairs nuclear localization and ability to transactivate expression of target genes. Deacetylated by SIRT1. In terms of processing, phosphorylation at Ser-64 and Ser-211 by PKA increases transcriptional activity and may help delay chondrocyte maturation downstream of PTHLH/PTHrP signaling. Phosphorylation at either Ser-64 or Ser-211 is required for sumoylation, but phosphorylation is not dependent on sumoylation. Phosphorylated on tyrosine residues; tyrosine dephosphorylation by PTPN11/SHP2 blocks SOX9 phosphorylation by PKA and subsequent SUMOylation. Sumoylated; phosphorylation at either Ser-64 or Ser-211 is required for sumoylation. Sumoylation is induced by BMP signaling pathway. Post-translationally, ubiquitinated; ubiquitination leads to proteasomal degradation and is negatively regulated by DDRGK1.

It localises to the nucleus. Functionally, transcription factor that plays a key role in chondrocytes differentiation and skeletal development. Specifically binds the 5'-ACAAAG-3' DNA motif present in enhancers and super-enhancers and promotes expression of genes important for chondrogenesis, including cartilage matrix protein-coding genes COL2A1, COL4A2, COL9A1, COL11A2 and ACAN, SOX5 and SOX6. Also binds to some promoter regions. Plays a central role in successive steps of chondrocyte differentiation. Absolutely required for precartilaginous condensation, the first step in chondrogenesis during which skeletal progenitors differentiate into prechondrocytes. Together with SOX5 and SOX6, required for overt chondrogenesis when condensed prechondrocytes differentiate into early stage chondrocytes, the second step in chondrogenesis. Later, required to direct hypertrophic maturation and block osteoblast differentiation of growth plate chondrocytes: maintains chondrocyte columnar proliferation, delays prehypertrophy and then prevents osteoblastic differentiation of chondrocytes by lowering beta-catenin (CTNNB1) signaling and RUNX2 expression. Also required for chondrocyte hypertrophy, both indirectly, by keeping the lineage fate of chondrocytes, and directly, by remaining present in upper hypertrophic cells and transactivating COL10A1 along with MEF2C. Low lipid levels are the main nutritional determinant for chondrogenic commitment of skeletal progenitor cells: when lipids levels are low, FOXO (FOXO1 and FOXO3) transcription factors promote expression of SOX9, which induces chondrogenic commitment and suppresses fatty acid oxidation. Mechanistically, helps, but is not required, to remove epigenetic signatures of transcriptional repression and deposit active promoter and enhancer marks at chondrocyte-specific genes. Acts in cooperation with the Hedgehog pathway-dependent GLI (GLI1 and GLI3) transcription factors. In addition to cartilage development, also acts as a regulator of proliferation and differentiation in epithelial stem/progenitor cells: involved in the lung epithelium during branching morphogenesis, by balancing proliferation and differentiation and regulating the extracellular matrix. Controls epithelial branching during kidney development. The polypeptide is Transcription factor SOX-9 (SOX9) (Canis lupus familiaris (Dog)).